The sequence spans 296 residues: Putative S-adenosyl-L-methionine-dependent methyltransferase MAP_3881 (296 aa).

S-adenosyl-L-methionine is bound by residues D121 and D150–L151.

It belongs to the UPF0677 family.

Exhibits S-adenosyl-L-methionine-dependent methyltransferase activity. The polypeptide is Putative S-adenosyl-L-methionine-dependent methyltransferase MAP_3881 (Mycolicibacterium paratuberculosis (strain ATCC BAA-968 / K-10) (Mycobacterium paratuberculosis)).